The primary structure comprises 117 residues: Large ribosomal subunit protein uL22 (117 aa).

This sequence belongs to the universal ribosomal protein uL22 family. In terms of assembly, part of the 50S ribosomal subunit.

This protein binds specifically to 23S rRNA; its binding is stimulated by other ribosomal proteins, e.g. L4, L17, and L20. It is important during the early stages of 50S assembly. It makes multiple contacts with different domains of the 23S rRNA in the assembled 50S subunit and ribosome. Its function is as follows. The globular domain of the protein is located near the polypeptide exit tunnel on the outside of the subunit, while an extended beta-hairpin is found that lines the wall of the exit tunnel in the center of the 70S ribosome. The polypeptide is Large ribosomal subunit protein uL22 (Chlorobium phaeobacteroides (strain BS1)).